The primary structure comprises 293 residues: MPVILDGKRLSEALQAKIAMAFSAYRGPKPILGILQVGNKEDSNIYVAHKLKVAESLGFLTKLVKMPENSTQDEIIGTLRNAAAEVTGIIVQLPLVSNRIENLQEILDNIPIEKDIDGLSSYNLASNYNCKDNFLSATPKGIILLLKHYNINFRSTVIALVGQSNIVGKPLAKYLSNFKNNTIKTYVKDTPKDDLHEAKIVIVATGVYQSVTADQLANGTVLIDVGIHRQGKTIHGDLDFASCFKKASYITPVPGGVGPLTVVALMFNLIKALILQNPNLDHEFLSLKEFINI.

NADP(+) is bound by residues 162–164 and isoleucine 227; that span reads GQS.

Belongs to the tetrahydrofolate dehydrogenase/cyclohydrolase family. Homodimer.

It carries out the reaction (6R)-5,10-methylene-5,6,7,8-tetrahydrofolate + NADP(+) = (6R)-5,10-methenyltetrahydrofolate + NADPH. It catalyses the reaction (6R)-5,10-methenyltetrahydrofolate + H2O = (6R)-10-formyltetrahydrofolate + H(+). It participates in one-carbon metabolism; tetrahydrofolate interconversion. Functionally, catalyzes the oxidation of 5,10-methylenetetrahydrofolate to 5,10-methenyltetrahydrofolate and then the hydrolysis of 5,10-methenyltetrahydrofolate to 10-formyltetrahydrofolate. This chain is Bifunctional protein FolD, found in Metamycoplasma arthritidis (strain 158L3-1) (Mycoplasma arthritidis).